The primary structure comprises 340 residues: Probable protein phosphatase 2C 21 (340 aa).

The tract at residues 1–21 (MGASPSRPLEQSPSSSEGENH) is disordered. Residues 24 to 305 (KYASYTTQGF…DNATAILVKF (282 aa)) enclose the PPM-type phosphatase domain. Residues D58, G59, D254, and D296 each coordinate Mn(2+). Residues 311–340 (DPDEVASARDEHQHNPEGGDEKLDINNDND) are disordered. Residues 316–340 (ASARDEHQHNPEGGDEKLDINNDND) are compositionally biased toward basic and acidic residues.

This sequence belongs to the PP2C family. Requires Mg(2+) as cofactor. It depends on Mn(2+) as a cofactor.

The enzyme catalyses O-phospho-L-seryl-[protein] + H2O = L-seryl-[protein] + phosphate. It catalyses the reaction O-phospho-L-threonyl-[protein] + H2O = L-threonyl-[protein] + phosphate. The sequence is that of Probable protein phosphatase 2C 21 from Oryza sativa subsp. japonica (Rice).